The sequence spans 553 residues: Urocanate hydratase (553 aa).

NAD(+) is bound by residues glycine 45 to glycine 46, glutamine 123, glycine 169 to glycine 171, aspartate 189, arginine 194, asparagine 235 to alanine 236, glutamine 256 to histidine 260, tyrosine 266 to valine 267, tyrosine 315, and glycine 485.

This sequence belongs to the urocanase family. NAD(+) is required as a cofactor.

Its subcellular location is the cytoplasm. The catalysed reaction is 4-imidazolone-5-propanoate = trans-urocanate + H2O. Its pathway is amino-acid degradation; L-histidine degradation into L-glutamate; N-formimidoyl-L-glutamate from L-histidine: step 2/3. In terms of biological role, catalyzes the conversion of urocanate to 4-imidazolone-5-propionate. The polypeptide is Urocanate hydratase (Staphylococcus aureus (strain MRSA252)).